A 514-amino-acid polypeptide reads, in one-letter code: 2-isopropylmalate synthase (514 aa).

The Pyruvate carboxyltransferase domain occupies 5–268 (LIIFDTTLRD…DVGLDTTQIV (264 aa)). The Mn(2+) site is built by Asp-14, His-202, His-204, and Asn-239. Positions 395-514 (KFVSLSQRSE…KDDKLNPQRS (120 aa)) are regulatory domain.

The protein belongs to the alpha-IPM synthase/homocitrate synthase family. LeuA type 1 subfamily. In terms of assembly, homodimer. Mn(2+) is required as a cofactor.

Its subcellular location is the cytoplasm. It carries out the reaction 3-methyl-2-oxobutanoate + acetyl-CoA + H2O = (2S)-2-isopropylmalate + CoA + H(+). Its pathway is amino-acid biosynthesis; L-leucine biosynthesis; L-leucine from 3-methyl-2-oxobutanoate: step 1/4. In terms of biological role, catalyzes the condensation of the acetyl group of acetyl-CoA with 3-methyl-2-oxobutanoate (2-ketoisovalerate) to form 3-carboxy-3-hydroxy-4-methylpentanoate (2-isopropylmalate). The sequence is that of 2-isopropylmalate synthase from Burkholderia ambifaria (strain ATCC BAA-244 / DSM 16087 / CCUG 44356 / LMG 19182 / AMMD) (Burkholderia cepacia (strain AMMD)).